A 637-amino-acid chain; its full sequence is Nucleoside triphosphatase I (637 aa).

The Helicase ATP-binding domain maps to 43–205 (FLGLNSMNSI…QMLVNLLRPG (163 aa)). Position 56–63 (56–63 (QETGVGKT)) interacts with ATP. Positions 142–145 (DECH) match the DEXH box motif. The Helicase C-terminal domain maps to 358–537 (ELYNYLYEHS…QLYKVFKHSS (180 aa)). The binding to the cap-specific mRNA (nucleoside-2'-O-)-methyltransferase stretch occupies residues 459–526 (DIFILDMTWN…DIIQSKSKEF (68 aa)).

Belongs to the helicase family. NPH I subfamily. In terms of assembly, monomer. Interacts (via C-terminus) with RAP94 (via N-terminus). Interacts with the cap-specific mRNA (nucleoside-2'-O-)-methyltransferase.

The protein localises to the virion. The enzyme catalyses a ribonucleoside 5'-triphosphate + H2O = a ribonucleoside 5'-diphosphate + phosphate + H(+). Its function is as follows. DNA-dependent ATPase required for providing the needed energy to achieve the termination of early transcripts. Acts in concert with the RAP94 subunit of the virion RNA polymerase and the capping enzyme/VTF to catalyze release of UUUUUNU-containing nascent RNA from the elongation complex. NPH-I must bind ssDNA in order to exhibit ATPase activity. This chain is Nucleoside triphosphatase I (NPH1), found in Vertebrata (FPV).